A 422-amino-acid chain; its full sequence is Probable D-serine dehydratase (422 aa).

Lys105 carries the N6-(pyridoxal phosphate)lysine modification.

This sequence belongs to the serine/threonine dehydratase family. DsdA subfamily. The cofactor is pyridoxal 5'-phosphate.

It carries out the reaction D-serine = pyruvate + NH4(+). This chain is Probable D-serine dehydratase, found in Carboxydothermus hydrogenoformans (strain ATCC BAA-161 / DSM 6008 / Z-2901).